The following is a 220-amino-acid chain: UPF0319 protein YccT (220 aa).

A signal peptide spans 1–20; it reads MKTGALTTFLALCLPVTVFA.

The protein belongs to the UPF0319 family.

This chain is UPF0319 protein YccT, found in Salmonella dublin (strain CT_02021853).